The sequence spans 338 residues: MLTERQLLILQTIIDDFIGSAQPVGSRTLAKKDAITFSSATIRNEMADLEELGFIEKTHSSSGRVPSEKGYRFYVDHLLAPQNLPKDEIVQIKDLFAERIFEAEKIAQQSAQILSELTNYTAIVLGPKLSTNKLKNVQIVSLDRQTAVAIIVTDTGHVQSKTITVPESVDLSDLEKMVNILNEKLSGVPMSELHNKIFKEIVTVLRGYVHNYDSAIKMLDGTFQVPLSEKIYFGGKANMLSQPEFHDIHKVRSLLTMIDNEAEFYDILRHKQVGIQVKIGRENSATAMEDCSLISATYSIGEEQLGTIAILGPTRMQYSRVISLLQLFTRQFTDGLKK.

Belongs to the HrcA family.

Its function is as follows. Negative regulator of class I heat shock genes (grpE-dnaK-dnaJ and groELS operons). Prevents heat-shock induction of these operons. The chain is Heat-inducible transcription repressor HrcA from Bacillus thuringiensis (strain Al Hakam).